The following is a 459-amino-acid chain: Cysteine--tRNA ligase (459 aa).

Cys-31 contributes to the Zn(2+) binding site. Positions 33-43 (PTVYDNPHIGN) match the 'HIGH' region motif. Residues Cys-216, His-241, and Glu-245 each coordinate Zn(2+). The short motif at 274–278 (KMSKS) is the 'KMSKS' region element. Lys-277 is an ATP binding site.

It belongs to the class-I aminoacyl-tRNA synthetase family. As to quaternary structure, monomer. Zn(2+) serves as cofactor.

The protein localises to the cytoplasm. The catalysed reaction is tRNA(Cys) + L-cysteine + ATP = L-cysteinyl-tRNA(Cys) + AMP + diphosphate. The sequence is that of Cysteine--tRNA ligase from Rickettsia felis (strain ATCC VR-1525 / URRWXCal2) (Rickettsia azadi).